The sequence spans 231 residues: Two-component response regulator ORR1 (231 aa).

Positions 9–135 constitute a Response regulatory domain; it reads RVLLVDDSPV…DVQRLRKCSP (127 aa). Aspartate 68 carries the post-translational modification 4-aspartylphosphate.

Belongs to the ARR family. Type-A subfamily. Post-translationally, two-component system major event consists of a His-to-Asp phosphorelay between a sensor histidine kinase (HK) and a response regulator (RR). In plants, the His-to-Asp phosphorelay involves an additional intermediate named Histidine-containing phosphotransfer protein (HPt). This multistep phosphorelay consists of a His-Asp-His-Asp sequential transfer of a phosphate group between first a His and an Asp of the HK protein, followed by the transfer to a conserved His of the HPt protein and finally the transfer to an Asp in the receiver domain of the RR protein. As to expression, expressed in mature leaves and flowers, and at low levels in roots and shoots.

Functions as a response regulator involved in His-to-Asp phosphorelay signal transduction system. Phosphorylation of the Asp residue in the receiver domain activates the ability of the protein to promote the transcription of target genes. Type-A response regulators seem to act as negative regulators of the cytokinin signaling. In Oryza sativa subsp. indica (Rice), this protein is Two-component response regulator ORR1.